Reading from the N-terminus, the 389-residue chain is MPLENLEEEGLPKNPDLRIAQLRFLLSLPEHRGDAAVREELMAAVRENNMAPYYEALCKSLDWQMDVDLLSKMKKANEEELKRLDEELEDAEKNLGESEIRDAMMAKAEYLCQIGDKEGALTAFRKTYDKTVALGHRLDIVFYLLRIGLFYMDNDLITRNTEKAKSLIEEGGDWDRRNRLKVYQGLYCVAIRDFKQAAELFLDTVSTFTSYELMDYKTFVTYTVYVSMIALERPDLREKVIKGAEILEVLHSLPAVRQYLFSLYECRYSVFFQSLAIVEQEMKKDWLFAPHYRYYVREMRIHAYSQLLESYRSLTLGYMAEAFGVGVDFIDQELSRFIAAGRLHCKIDKVNEIVETNRPDSKNWQYQETIKKGDLLLNRVQKLSRVINM.

The region spanning 193-361 (DFKQAAELFL…EIVETNRPDS (169 aa)) is the PCI domain.

Belongs to the proteasome subunit S10 family. In terms of assembly, component of the 19S proteasome regulatory particle complex. The 26S proteasome consists of a 20S core particle (CP) and two 19S regulatory subunits (RP). The regulatory particle is made of a lid composed of 9 subunits including PSMD6, a base containing 6 ATPases and few additional components.

Component of the 26S proteasome, a multiprotein complex involved in the ATP-dependent degradation of ubiquitinated proteins. This complex plays a key role in the maintenance of protein homeostasis by removing misfolded or damaged proteins, which could impair cellular functions, and by removing proteins whose functions are no longer required. Therefore, the proteasome participates in numerous cellular processes, including cell cycle progression, apoptosis, or DNA damage repair. The polypeptide is 26S proteasome non-ATPase regulatory subunit 6 (Psmd6) (Mus musculus (Mouse)).